The sequence spans 114 residues: Hydrogenase maturation factor HypA (114 aa).

His-2 contributes to the Ni(2+) binding site. Residues Cys-73, Cys-76, Cys-89, and Cys-92 each contribute to the Zn(2+) site.

Belongs to the HypA/HybF family.

In terms of biological role, involved in the maturation of [NiFe] hydrogenases. Required for nickel insertion into the metal center of the hydrogenase. The chain is Hydrogenase maturation factor HypA from Desulfitobacterium hafniense (strain DSM 10664 / DCB-2).